Reading from the N-terminus, the 467-residue chain is Translation initiation factor eIF2B subunit delta (467 aa).

Residues 1-106 are disordered; the sequence is MGFSAEQAKK…QNPQNSPETD (106 aa). Residues serine 16, serine 19, serine 21, and serine 23 each carry the phosphoserine modification. Positions 16–37 are enriched in polar residues; it reads SPVSESSSVGGTSPATASSVVS. A Phosphothreonine modification is found at threonine 27. Residues serine 28 and serine 37 each carry the phosphoserine modification. The span at 51–61 shows a compositional bias: basic residues; it reads LKKARKQASRR. Over residues 84–102 the composition is skewed to low complexity; it reads PNKNSNQQKKASKQNPQNS.

It belongs to the eIF-2B alpha/beta/delta subunits family. In terms of assembly, component of the translation initiation factor 2B (eIF2B) complex which is a heterodecamer of two sets of five different subunits: alpha, beta, gamma, delta and epsilon. Subunits alpha, beta and delta comprise a regulatory subcomplex and subunits epsilon and gamma comprise a catalytic subcomplex. Within the complex, the hexameric regulatory complex resides at the center, with the two heterodimeric catalytic subcomplexes bound on opposite sides.

It is found in the cytoplasm. The protein resides in the cytosol. In terms of biological role, acts as a component of the translation initiation factor 2B (eIF2B) complex, which catalyzes the exchange of GDP for GTP on the eukaryotic initiation factor 2 (eIF2) complex gamma subunit. Its guanine nucleotide exchange factor activity is repressed when bound to eIF2 complex phosphorylated on the alpha subunit, thereby limiting the amount of methionyl-initiator methionine tRNA available to the ribosome and consequently global translation is repressed. The polypeptide is Translation initiation factor eIF2B subunit delta (tif224) (Schizosaccharomyces pombe (strain 972 / ATCC 24843) (Fission yeast)).